The following is a 657-amino-acid chain: uncharacterized protein (657 aa).

The signal sequence occupies residues 1–17 (MACVLACVAVLIGAASA).

This is an uncharacterized protein from Orgyia pseudotsugata (Douglas-fir tussock moth).